A 226-amino-acid chain; its full sequence is Adenylate kinase (226 aa).

11-16 (GSGKGT) serves as a coordination point for ATP. Residues 31–64 (SAGEILKHALSVTKFHFNFNTDNMLNQINSGNLV) are NMP. Residues 62-64 (NLV), 90-93 (GFPR), and glutamine 97 contribute to the AMP site. Residues 127-164 (GRQVHIKSGRTYHIKFNPPKLDGIDDITGEKLVIRADD) form an LID region. ATP-binding positions include arginine 128 and 137–138 (TY). Positions 161 and 172 each coordinate AMP. Glutamine 205 serves as a coordination point for ATP.

The protein belongs to the adenylate kinase family. As to quaternary structure, monomer.

The protein localises to the cytoplasm. It catalyses the reaction AMP + ATP = 2 ADP. Its pathway is purine metabolism; AMP biosynthesis via salvage pathway; AMP from ADP: step 1/1. In terms of biological role, catalyzes the reversible transfer of the terminal phosphate group between ATP and AMP. Plays an important role in cellular energy homeostasis and in adenine nucleotide metabolism. This Blochmanniella floridana protein is Adenylate kinase.